The chain runs to 384 residues: Oxoeicosanoid receptor 1 (384 aa).

The segment at 1–21 (MELHNLSSPSPSLSSSVLPPS) is disordered. Over 1–58 (MELHNLSSPSPSLSSSVLPPSFSPSPSSAPSAFTTVGGSSGGPCHPTSSSLVSAFLAP) the chain is Extracellular. A glycan (N-linked (GlcNAc...) asparagine) is linked at N5. Residues 7-21 (SSPSPSLSSSVLPPS) are compositionally biased toward low complexity. A helical transmembrane segment spans residues 59–79 (ILALEFVLGLVGNSLALFIFC). Over 80 to 87 (IHTRPWTS) the chain is Cytoplasmic. Residues 88 to 108 (NTVFLVSLVAADFLLISNLPL) form a helical membrane-spanning segment. At 109 to 129 (RVDYYLLHETWRFGAAACKVN) the chain is on the extracellular side. An intrachain disulfide couples C126 to C198. A helical membrane pass occupies residues 130–152 (LFMLSTNRTASVVFLTAIALNRY). At 153-172 (LKVVQPHHVLSRASVGAAAR) the chain is on the cytoplasmic side. Residues 173–193 (VAGGLWVGILLLNGHLLLSTF) traverse the membrane as a helical segment. Residues 194 to 215 (SGPSCLSYRVGTKPSASLRWHQ) lie on the Extracellular side of the membrane. Residues 216 to 236 (ALYLLEFFLPLALILFAIVSI) traverse the membrane as a helical segment. Over 237–256 (GLTIRNRGLGGQAGPQRAMR) the chain is Cytoplasmic. Residues 257-277 (VLAMVVAVYTICFLPSIIFGM) traverse the membrane as a helical segment. Residues 278–297 (ASMVAFWLSACRSLDLCTQL) lie on the Extracellular side of the membrane. Residues 298-318 (FHGSLAFTYLNSVLDPVLYCF) form a helical membrane-spanning segment. Residues 319 to 384 (SSPNFLHQSR…SLEKEGSSQG (66 aa)) lie on the Cytoplasmic side of the membrane.

This sequence belongs to the G-protein coupled receptor 1 family. Expressed in various tissues except brain. Expression is more intense in liver, kidney, peripheral leukocyte, lung, and spleen than in other tissues. Highly expressed in eosinophils, neutrophils, and lung macrophages.

Its subcellular location is the membrane. Its function is as follows. Receptor for eicosanoids and polyunsaturated fatty acids such as 5-oxo-6E,8Z,11Z,14Z-eicosatetraenoic acid (5-OXO-ETE), 5(S)-hydroperoxy-6E,8Z,11Z,14Z-eicosatetraenoic acid (5(S)-HPETE) and arachidonic acid. Seems to be coupled to the G(i)/G(o), families of heteromeric G proteins. This chain is Oxoeicosanoid receptor 1 (OXER1), found in Homo sapiens (Human).